A 100-amino-acid polypeptide reads, in one-letter code: MARKSLIQREKKRKKLEQKYHLIRRSSKKEISKVPSLSDKWEIHGKLQSPPRNSAPTRLHRRCFSTGRPRANYRDFGLSGHILREMVHACLLPGATRSSW.

The protein belongs to the universal ribosomal protein uS14 family. As to quaternary structure, part of the 30S ribosomal subunit.

It is found in the plastid. Its subcellular location is the chloroplast. Functionally, binds 16S rRNA, required for the assembly of 30S particles. This Buxus microphylla (Littleleaf boxwood) protein is Small ribosomal subunit protein uS14c.